Reading from the N-terminus, the 350-residue chain is Protein RecA (350 aa).

66–73 is an ATP binding site; that stretch reads GPESSGKT.

Belongs to the RecA family.

The protein resides in the cytoplasm. Can catalyze the hydrolysis of ATP in the presence of single-stranded DNA, the ATP-dependent uptake of single-stranded DNA by duplex DNA, and the ATP-dependent hybridization of homologous single-stranded DNAs. It interacts with LexA causing its activation and leading to its autocatalytic cleavage. The polypeptide is Protein RecA (Nocardioides sp. (strain ATCC BAA-499 / JS614)).